The primary structure comprises 364 residues: DNA polymerase IV (364 aa).

The UmuC domain occupies 14–198 (IIHIDMDAFF…LPVEKFHGVG (185 aa)). Residues D18 and D116 each coordinate Mg(2+). The active site involves E117.

The protein belongs to the DNA polymerase type-Y family. In terms of assembly, monomer. It depends on Mg(2+) as a cofactor.

It is found in the cytoplasm. It catalyses the reaction DNA(n) + a 2'-deoxyribonucleoside 5'-triphosphate = DNA(n+1) + diphosphate. Functionally, poorly processive, error-prone DNA polymerase involved in untargeted mutagenesis. Copies undamaged DNA at stalled replication forks, which arise in vivo from mismatched or misaligned primer ends. These misaligned primers can be extended by PolIV. Exhibits no 3'-5' exonuclease (proofreading) activity. May be involved in translesional synthesis, in conjunction with the beta clamp from PolIII. In Lactococcus lactis subsp. cremoris (strain SK11), this protein is DNA polymerase IV.